A 198-amino-acid chain; its full sequence is Proteasome subunit beta type-4 (198 aa).

Met-1 is subject to N-acetylmethionine. Phosphoserine is present on Ser-76.

The protein belongs to the peptidase T1B family. The 26S proteasome consists of a 20S proteasome core and two 19S regulatory subunits. The 20S proteasome core is composed of 28 subunits that are arranged in four stacked rings, resulting in a barrel-shaped structure. The two end rings are each formed by seven alpha subunits, and the two central rings are each formed by seven beta subunits. The catalytic chamber with the active sites is on the inside of the barrel.

The protein localises to the cytoplasm. Its subcellular location is the nucleus. In terms of biological role, non-catalytic component of the proteasome which degrades poly-ubiquitinated proteins in the cytoplasm and in the nucleus. It is essential for the regulated turnover of proteins and for the removal of misfolded proteins. The proteasome is a multicatalytic proteinase complex that is characterized by its ability to cleave peptides with Arg, Phe, Tyr, Leu, and Glu adjacent to the leaving group at neutral or slightly basic pH. It has an ATP-dependent proteolytic activity. This subunit has a chymotrypsin-like activity. The chain is Proteasome subunit beta type-4 (PRE1) from Saccharomyces cerevisiae (strain ATCC 204508 / S288c) (Baker's yeast).